A 148-amino-acid polypeptide reads, in one-letter code: Deoxyuridine 5'-triphosphate nucleotidohydrolase (148 aa).

Substrate-binding positions include 68–70, Asn-81, 85–87, and Lys-95; these read RSG and TID.

The protein belongs to the dUTPase family. The cofactor is Mg(2+).

It carries out the reaction dUTP + H2O = dUMP + diphosphate + H(+). The protein operates within pyrimidine metabolism; dUMP biosynthesis; dUMP from dCTP (dUTP route): step 2/2. Its function is as follows. This enzyme is involved in nucleotide metabolism: it produces dUMP, the immediate precursor of thymidine nucleotides and it decreases the intracellular concentration of dUTP so that uracil cannot be incorporated into DNA. The sequence is that of Deoxyuridine 5'-triphosphate nucleotidohydrolase from Rickettsia felis (strain ATCC VR-1525 / URRWXCal2) (Rickettsia azadi).